The sequence spans 260 residues: POLG alternative reading frame (260 aa).

2 disordered regions span residues 1–50 (MEPK…LRPR) and 108–219 (ARRG…RRGG). 3 stretches are compositionally biased toward low complexity: residues 36 to 48 (AGSSSGALGLQLR), 116 to 154 (GRGAPQRRAPAEARALGAASRALARRGAAPAAPLRGQPG), and 164 to 186 (AEPALPGGGQLAVAGPAAPEAPG). The interval 104–130 (ANLRARRGDAWRGRGAPQRRAPAEARA) is required for nucleolar localization. Gly residues-rich tracts occupy residues 187-199 (LGLGGGLDPVRPR) and 209-219 (RGAGPGVRRGG).

As to quaternary structure, interacts with C1QBP; the interaction results in nucleolar localization of C1QBP, probably due to prevention of C1QBP maturation and redirection from mitochondria to nucleoli. Post-translationally, undergoes proteolytic cleavage to produce a secreted C-terminal fragment.

It is found in the nucleus. Its subcellular location is the nucleolus. The protein resides in the secreted. In Homo sapiens (Human), this protein is POLG alternative reading frame.